We begin with the raw amino-acid sequence, 140 residues long: Flagellar assembly factor FliW (140 aa).

The protein belongs to the FliW family. In terms of assembly, interacts with translational regulator CsrA and flagellin(s).

The protein localises to the cytoplasm. In terms of biological role, acts as an anti-CsrA protein, binds CsrA and prevents it from repressing translation of its target genes, one of which is flagellin. Binds to flagellin and participates in the assembly of the flagellum. The sequence is that of Flagellar assembly factor FliW from Syntrophotalea carbinolica (strain DSM 2380 / NBRC 103641 / GraBd1) (Pelobacter carbinolicus).